Consider the following 273-residue polypeptide: Small ribosomal subunit protein uS3 (273 aa).

The 69-residue stretch at 43–111 (IRQLMSTGME…QVQLNILEVK (69 aa)) folds into the KH type-2 domain. A compositionally biased stretch (low complexity) spans 218–227 (QQAAAAPSRG). The interval 218 to 273 (QQAAAAPSRGRAGDRPGRPGGDRRRRNDRPAAEAAPAAVEAPAAEAAAPAAEGGQA) is disordered. Basic and acidic residues predominate over residues 228 to 239 (RAGDRPGRPGGD). Residues 249–273 (AEAAPAAVEAPAAEAAAPAAEGGQA) show a composition bias toward low complexity.

It belongs to the universal ribosomal protein uS3 family. As to quaternary structure, part of the 30S ribosomal subunit. Forms a tight complex with proteins S10 and S14.

Its function is as follows. Binds the lower part of the 30S subunit head. Binds mRNA in the 70S ribosome, positioning it for translation. The protein is Small ribosomal subunit protein uS3 of Paenarthrobacter aurescens (strain TC1).